The chain runs to 314 residues: Putative gluconeogenesis factor (314 aa).

The protein belongs to the gluconeogenesis factor family.

It localises to the cytoplasm. Required for morphogenesis under gluconeogenic growth conditions. The protein is Putative gluconeogenesis factor of Thermotoga maritima (strain ATCC 43589 / DSM 3109 / JCM 10099 / NBRC 100826 / MSB8).